Here is a 134-residue protein sequence, read N- to C-terminus: uncharacterized protein (134 aa).

This is an uncharacterized protein from Saccharomyces cerevisiae (strain ATCC 204508 / S288c) (Baker's yeast).